We begin with the raw amino-acid sequence, 1746 residues long: Non-reducing polyketide synthase ptaA (1746 aa).

Residues 4-227 form an N-terminal acylcarrier protein transacylase domain (SAT) region; the sequence is NSGSGTSPWG…ALPVYGGLCH (224 aa). One can recognise a Ketosynthase family 3 (KS3) domain in the interval 361-796; it reads QSKIAIVGMS…GGNTTIAIEE (436 aa). Active-site for beta-ketoacyl synthase activity residues include Cys-534, His-670, and His-714. The tract at residues 898–1218 is malonyl-CoA:ACP transacylase (MAT) domain; sequence FAFTGQGASY…LGALHLAGIP (321 aa). Positions 1286-1605 are product template (PT) domain; sequence TSTVHRVIGE…RLLLDRFFSA (320 aa). Residues 1290-1425 form an N-terminal hotdog fold region; it reads HRVIGETFDG…ATLFYGKAND (136 aa). In terms of domain architecture, PKS/mFAS DH spans 1290 to 1600; the sequence is HRVIGETFDG…FRRYPRLLLD (311 aa). The active-site Proton acceptor; for dehydratase activity is the His-1322. Residues 1452–1600 are C-terminal hotdog fold; the sequence is VANRFSRNMA…FRRYPRLLLD (149 aa). Asp-1511 acts as the Proton donor; for dehydratase activity in catalysis. The region spanning 1671-1745 is the Carrier domain; it reads DSITVKAMAL…DLRAWLLEYY (75 aa). O-(pantetheine 4'-phosphoryl)serine is present on Ser-1705.

The enzyme catalyses holo-[ACP] + 8 malonyl-CoA + 8 H(+) = atrochrysone carboxyl-[ACP] + 8 CO2 + 8 CoA + 2 H2O. The protein operates within secondary metabolite biosynthesis. In terms of biological role, non-reducing polyketide synthase; part of the gene cluster that mediates the biosynthesis of pestheic acid, a diphenyl ether which is a biosynthetic precursor of the unique chloropupukeananes. The biosynthesis initiates from condensation of acetate and malonate units catalyzed by the non-reducing PKS ptaA. As the ptaA protein is TE/CLC domain-deficient, hydrolysis and Claisen cyclization of the polyketide could be catalyzed by ptaB containing a beta-lactamase domain. The ptaB protein might hydrolyze the thioester bond between the ACP of ptaA and the intermediate to release atrochrysone carboxylic acid, which is spontaneously dehydrated to form endocrocin anthrone. Endocrocin anthrone is then converted to endocrocin, catalyzed by the anthrone oxygenase ptaC. Spontaneous decarboxylation of endocrocin occurs to generate emodin. An O-methyltransferase (ptaH or ptaI) could methylate emodin to form physcion. PtaJ could then catalyze the oxidative cleavage of physcion, and rotation of the intermediate could then afford desmethylisosulochrin. PtaF, a putative NADH-dependent oxidoreductase, might also participate in the oxidative cleavage step. Desmethylisosulochrin is then transformed by another O-methyltransferase (ptaH or ptaI) to form isosulochrin. Chlorination of isosulochrin by ptaM in the cyclohexadienone B ring then produces chloroisosulochrin. PtaE is responsible for the oxidative coupling reactions of both benzophenones isosulochrin and chloroisosulochrin to RES-1214-1 and pestheic acid respectively, regardless of chlorination. The chain is Non-reducing polyketide synthase ptaA from Pestalotiopsis fici (strain W106-1 / CGMCC3.15140).